Here is a 468-residue protein sequence, read N- to C-terminus: MIMRTSWVASRKGQSNVSQMYFARREVITEEMSFVAKKENLPESLIMEEVARGRMIIPANINHLNLEPMAIGIASSCKVNANIGASPNASDVNEELKKLHLAVKYGADTVMDLSTGGVNLDEVRTAIIQASPVPIGTVPVYQALESVHGSIEKLSEEDFLHIIEKHCQQGVDYQTIHAGLLIEHLPKVKGRLTGIVSRGGGILAQWMLYHHKQNPLFTRFDDICEIFKRYDCSFSLGDSLRPGCLHDASDEAQLAELKTLGELTQRAWKHDVQVMVEGPGHVPMDQIEFNVRKQMEDCLEAPFYVLGPLVTDIAPGYDHITSAIGAAMAGWYGTAMLCYVTPKEHLGLPNPEDVREGLIAYKIAAHAADIARHRSGARDRDDELSRARYAFDWNKQFELSLDPERAREYHDETLPADIYKQAEFCSMCGPKHCPMQTKITDKDLENLESILSSKGAKEINTMKLDKEV.

Residues N82, M111, Y141, H177, 197–199 (SRG), 238–241 (DSLR), and E277 contribute to the substrate site. Residue H281 coordinates Zn(2+). Position 304 (Y304) interacts with substrate. H345 is a Zn(2+) binding site. Residues C425, C428, and C433 each coordinate [4Fe-4S] cluster.

The protein belongs to the ThiC family. [4Fe-4S] cluster serves as cofactor.

It catalyses the reaction 5-amino-1-(5-phospho-beta-D-ribosyl)imidazole + S-adenosyl-L-methionine = 4-amino-2-methyl-5-(phosphooxymethyl)pyrimidine + CO + 5'-deoxyadenosine + formate + L-methionine + 3 H(+). It participates in cofactor biosynthesis; thiamine diphosphate biosynthesis. In terms of biological role, catalyzes the synthesis of the hydroxymethylpyrimidine phosphate (HMP-P) moiety of thiamine from aminoimidazole ribotide (AIR) in a radical S-adenosyl-L-methionine (SAM)-dependent reaction. The polypeptide is Phosphomethylpyrimidine synthase (Prochlorococcus marinus (strain SARG / CCMP1375 / SS120)).